The following is an 852-amino-acid chain: Envelope glycoprotein gp160 (852 aa).

An N-terminal signal peptide occupies residues methionine 1–asparagine 24. The Extracellular segment spans residues phenylalanine 25–leucine 677. An N-linked (GlcNAc...) asparagine; by host glycan is attached at asparagine 37. Cysteine 44 and cysteine 57 are disulfide-bonded. 11 N-linked (GlcNAc...) asparagine; by host glycosylation sites follow: asparagine 70, asparagine 114, asparagine 148, asparagine 195, asparagine 205, asparagine 237, asparagine 247, asparagine 270, asparagine 276, asparagine 287, and asparagine 298. 4 cysteine pairs are disulfide-bonded: cysteine 101-cysteine 213, cysteine 108-cysteine 204, cysteine 113-cysteine 162, and cysteine 236-cysteine 248. The V1 stretch occupies residues cysteine 113 to aspartate 161. Residues cysteine 162–cysteine 204 form a V2 region. The segment at cysteine 303–tryptophan 335 is V3. A disulfide bridge links cysteine 303 with cysteine 336. 7 N-linked (GlcNAc...) asparagine; by host glycosylation sites follow: asparagine 341, asparagine 364, asparagine 396, asparagine 406, asparagine 445, asparagine 461, and asparagine 464. 2 disulfides stabilise this stretch: cysteine 388–cysteine 444 and cysteine 395–cysteine 417. A V4 region spans residues cysteine 395–cysteine 417. The segment at asparagine 461–valine 467 is V5. The fusion peptide stretch occupies residues glycine 510–alanine 530. An immunosuppression region spans residues leucine 573–glutamine 589. N-linked (GlcNAc...) asparagine; by host glycosylation is found at asparagine 609, asparagine 618, and asparagine 634. A coiled-coil region spans residues glutamine 622–lysine 648. Residues lysine 655 to arginine 676 form an MPER; binding to GalCer region. Residues glycine 678–leucine 698 form a helical membrane-spanning segment. Residues alanine 699–leucine 852 lie on the Cytoplasmic side of the membrane. A YXXV motif; contains endocytosis signal motif is present at residues tyrosine 705–valine 708. A disordered region spans residues proline 713 to asparagine 740. The S-palmitoyl cysteine; by host moiety is linked to residue cysteine 771. The short motif at leucine 851–leucine 852 is the Di-leucine internalization motif element.

In terms of assembly, the mature envelope protein (Env) consists of a homotrimer of non-covalently associated gp120-gp41 heterodimers. The resulting complex protrudes from the virus surface as a spike. There seems to be as few as 10 spikes on the average virion. Interacts with human CD4, CCR5 and CXCR4, to form a P4HB/PDI-CD4-CXCR4-gp120 complex. Gp120 also interacts with the C-type lectins CD209/DC-SIGN and CLEC4M/DC-SIGNR (collectively referred to as DC-SIGN(R)). Gp120 and gp41 interact with GalCer. The mature envelope protein (Env) consists of a homotrimer of non-covalently associated gp120-gp41 heterodimers. The resulting complex protrudes from the virus surface as a spike. There seems to be as few as 10 spikes on the average virion. Specific enzymatic cleavages in vivo yield mature proteins. Envelope glycoproteins are synthesized as an inactive precursor that is heavily N-glycosylated and processed likely by host cell furin in the Golgi to yield the mature SU and TM proteins. The cleavage site between SU and TM requires the minimal sequence [KR]-X-[KR]-R. In terms of processing, palmitoylation of the transmembrane protein and of Env polyprotein (prior to its proteolytic cleavage) is essential for their association with host cell membrane lipid rafts. Palmitoylation is therefore required for envelope trafficking to classical lipid rafts, but not for viral replication.

Its subcellular location is the virion membrane. It localises to the host cell membrane. The protein resides in the host endosome membrane. Its function is as follows. The surface protein gp120 (SU) attaches the virus to the host lymphoid cell by binding to the primary receptor CD4. This interaction induces a structural rearrangement creating a high affinity binding site for a chemokine coreceptor like CXCR4 and/or CCR5. This peculiar 2 stage receptor-interaction strategy allows gp120 to maintain the highly conserved coreceptor-binding site in a cryptic conformation, protected from neutralizing antibodies. Since CD4 also displays a binding site for the disulfide-isomerase P4HB/PDI, a P4HB/PDI-CD4-CXCR4-gp120 complex may form. In that complex, P4HB/PDI could reach and reduce gp120 disulfide bonds, causing major conformational changes in gp120. TXN, another PDI family member could also be involved in disulfide rearrangements in Env during fusion. These changes are transmitted to the transmembrane protein gp41 and are thought to activate its fusogenic potential by unmasking its fusion peptide. The surface protein gp120 is a ligand for CD209/DC-SIGN and CLEC4M/DC-SIGNR, which are respectively found on dendritic cells (DCs), and on endothelial cells of liver sinusoids and lymph node sinuses. These interactions allow capture of viral particles at mucosal surfaces by these cells and subsequent transmission to permissive cells. DCs are professional antigen presenting cells, critical for host immunity by inducing specific immune responses against a broad variety of pathogens. They act as sentinels in various tissues where they take up antigen, process it, and present it to T-cells following migration to lymphoid organs. HIV subverts the migration properties of dendritic cells to gain access to CD4+ T-cells in lymph nodes. Virus transmission to permissive T-cells occurs either in trans (without DCs infection, through viral capture and transmission), or in cis (following DCs productive infection, through the usual CD4-gp120 interaction), thereby inducing a robust infection. In trans infection, bound virions remain infectious over days and it is proposed that they are not degraded, but protected in non-lysosomal acidic organelles within the DCs close to the cell membrane thus contributing to the viral infectious potential during DCs' migration from the periphery to the lymphoid tissues. On arrival at lymphoid tissues, intact virions recycle back to DCs' cell surface allowing virus transmission to CD4+ T-cells. Virion capture also seems to lead to MHC-II-restricted viral antigen presentation, and probably to the activation of HIV-specific CD4+ cells. Functionally, the transmembrane protein gp41 (TM) acts as a class I viral fusion protein. Under the current model, the protein has at least 3 conformational states: pre-fusion native state, pre-hairpin intermediate state, and post-fusion hairpin state. During fusion of viral and target intracellular membranes, the coiled coil regions (heptad repeats) assume a trimer-of-hairpins structure, positioning the fusion peptide in close proximity to the C-terminal region of the ectodomain. The formation of this structure appears to drive apposition and subsequent fusion of viral and target cell membranes. Complete fusion occurs in host cell endosomes and is dynamin-dependent, however some lipid transfer might occur at the plasma membrane. The virus undergoes clathrin-dependent internalization long before endosomal fusion, thus minimizing the surface exposure of conserved viral epitopes during fusion and reducing the efficacy of inhibitors targeting these epitopes. Membranes fusion leads to delivery of the nucleocapsid into the cytoplasm. In terms of biological role, the envelope glycoprotein gp160 precursor down-modulates cell surface CD4 antigen by interacting with it in the endoplasmic reticulum and blocking its transport to the cell surface. Its function is as follows. The gp120-gp41 heterodimer seems to contribute to T-cell depletion during HIV-1 infection. The envelope glycoproteins expressed on the surface of infected cells induce apoptosis through an interaction with uninfected cells expressing the receptor (CD4) and the coreceptors CXCR4 or CCR5. This type of bystander killing may be obtained by at least three distinct mechanisms. First, the interaction between the 2 cells can induce cellular fusion followed by nuclear fusion within the syncytium. Syncytia are condemned to die from apoptosis. Second, the 2 interacting cells may not fuse entirely and simply exchange plasma membrane lipids, after a sort of hemifusion process, followed by rapid death. Third, it is possible that virus-infected cells, on the point of undergoing apoptosis, fuse with CD4-expressing cells, in which case apoptosis is rapidly transmitted from one cell to the other and thus occurs in a sort of contagious fashion. The gp120-gp41 heterodimer allows rapid transcytosis of the virus through CD4 negative cells such as simple epithelial monolayers of the intestinal, rectal and endocervical epithelial barriers. Both gp120 and gp41 specifically recognize glycosphingolipids galactosyl-ceramide (GalCer) or 3' sulfo-galactosyl-ceramide (GalS) present in the lipid rafts structures of epithelial cells. Binding to these alternative receptors allows the rapid transcytosis of the virus through the epithelial cells. This transcytotic vesicle-mediated transport of virions from the apical side to the basolateral side of the epithelial cells does not involve infection of the cells themselves. In Human immunodeficiency virus type 2 subtype B (isolate EHO) (HIV-2), this protein is Envelope glycoprotein gp160 (env).